We begin with the raw amino-acid sequence, 174 residues long: Gamma-crystallin F (174 aa).

2 consecutive Beta/gamma crystallin 'Greek key' domains span residues 2 to 40 and 41 to 83; these read GKITFYEDRGFQGRHYECSTDHSNLQPYFSRCNSVRVDS and GCWM…HLIP. A connecting peptide region spans residues 84-87; that stretch reads HSSS. 2 consecutive Beta/gamma crystallin 'Greek key' domains span residues 88-128 and 129-171; these read HRIR…HVIE and GYWV…RRIM.

The protein belongs to the beta/gamma-crystallin family.

Crystallins are the dominant structural components of the vertebrate eye lens. This is Gamma-crystallin F (Crygf) from Rattus norvegicus (Rat).